The chain runs to 780 residues: E3 UFM1-protein ligase 1 homolog (780 aa).

Residues 403 to 413 (STSSTNPNHST) show a composition bias toward polar residues. 2 disordered regions span residues 403-458 (STSS…RSHI) and 734-760 (SSDKQKPEMSEEPKDSDNSNDNQNIDL). 2 stretches are compositionally biased toward basic and acidic residues: residues 443–458 (KDRSTPDDLESTRSHI) and 736–750 (DKQKPEMSEEPKDSD).

Belongs to the UFL1 family.

In terms of biological role, E3 UFM1-protein ligase that mediates ufmylation of target proteins. In Trichoplax adhaerens (Trichoplax reptans), this protein is E3 UFM1-protein ligase 1 homolog.